We begin with the raw amino-acid sequence, 426 residues long: Dihydroorotase (426 aa).

Residues His-58 and His-60 each coordinate Zn(2+). Substrate is bound by residues 60–62 and Asn-92; that span reads HLR. Asp-150, His-177, and His-230 together coordinate Zn(2+). Asn-276 is a substrate binding site. Asp-303 is a binding site for Zn(2+). Asp-303 is an active-site residue. Substrate contacts are provided by residues His-307 and 321 to 322; that span reads FG.

This sequence belongs to the metallo-dependent hydrolases superfamily. DHOase family. Class I DHOase subfamily. Zn(2+) serves as cofactor.

It catalyses the reaction (S)-dihydroorotate + H2O = N-carbamoyl-L-aspartate + H(+). Its pathway is pyrimidine metabolism; UMP biosynthesis via de novo pathway; (S)-dihydroorotate from bicarbonate: step 3/3. In terms of biological role, catalyzes the reversible cyclization of carbamoyl aspartate to dihydroorotate. This is Dihydroorotase from Listeria monocytogenes serovar 1/2a (strain ATCC BAA-679 / EGD-e).